Here is a 314-residue protein sequence, read N- to C-terminus: Ficolin-2 (314 aa).

Positions 1 to 17 are cleaved as a signal peptide; sequence MALGSAALFVLTLTVHA. One can recognise a Collagen-like domain in the interval 40–96; the sequence is GCPGLPGAAGPKGEAGAKGDRGESGLPGIPGKEGPTGPKGNQGEKGIRGEKGDSGPS. The segment at 49-101 is disordered; the sequence is GPKGEAGAKGDRGESGLPGIPGKEGPTGPKGNQGEKGIRGEKGDSGPSQSCAT. A Fibrinogen C-terminal domain is found at 97-314; the sequence is QSCATGPRTC…KVSEMKVRLI (218 aa). Disulfide bonds link Cys-99/Cys-127 and Cys-106/Cys-134. Ca(2+) is bound by residues Asp-250, Asp-252, Ser-254, and Ser-256. Cys-258 and Cys-271 are disulfide-bonded. Asn-301 is a glycosylation site (N-linked (GlcNAc...) asparagine).

The protein belongs to the ficolin lectin family. In terms of assembly, homotrimer. Interacts with elastin. Interacts with MASP1 and MASP2.

It is found in the secreted. May function in innate immunity through activation of the lectin complement pathway. Calcium-dependent and GlcNAc-binding lectin. The protein is Ficolin-2 (Fcn2) of Mus musculus (Mouse).